Consider the following 319-residue polypeptide: MSTQTRVRHFLADDDLTPAQQREVLELASELKQHPYSRKTYDGPQSVAVLFDKTSTRTRFSFDAGISQLGGHAIVVDSGKSQMGKGETFQDTGAVLSRFVSTIVWRTGSHQNLLDMAETATVPIVNALSDDLHPCQILADLQTCIEHLCPQEGVPGLKGLKAVYLGDGDNNMANSYMIGFATAGLDITIIAPKKFQPKQEFVDRAEKRASETGAIVSVTADISAVSDADVVITDTWVSMGMENDGIDRRTPFLPYQVNDEVMALAKKSAIFLHCLPAYRGSEVAASVIDGPQSVVFDEAENRLHAQKALLVWLMENQPR.

Residues 55 to 58 (STRT), glutamine 82, arginine 106, and 133 to 136 (HPCQ) each bind carbamoyl phosphate. L-ornithine-binding positions include asparagine 171, aspartate 234, and 238–239 (SM). Residues 274-275 (CL) and arginine 302 each bind carbamoyl phosphate.

This sequence belongs to the aspartate/ornithine carbamoyltransferase superfamily. OTCase family.

It localises to the cytoplasm. The catalysed reaction is carbamoyl phosphate + L-ornithine = L-citrulline + phosphate + H(+). It functions in the pathway amino-acid biosynthesis; L-arginine biosynthesis; L-arginine from L-ornithine and carbamoyl phosphate: step 1/3. In terms of biological role, reversibly catalyzes the transfer of the carbamoyl group from carbamoyl phosphate (CP) to the N(epsilon) atom of ornithine (ORN) to produce L-citrulline. This Corynebacterium diphtheriae (strain ATCC 700971 / NCTC 13129 / Biotype gravis) protein is Ornithine carbamoyltransferase.